Consider the following 711-residue polypeptide: Double-stranded RNA-specific editase 1 (711 aa).

Residues 1–78 are disordered; the sequence is MDIEDEENMS…KRRKTPGPVL (78 aa). Basic residues predominate over residues 63–73; sequence SKYRLKKRRKT. The region spanning 78–144 is the DRBM 1 domain; it reads LPKNALMQLN…AEKALRSFVQ (67 aa). Interaction with substrate RNA regions lie at residues 83–88 and 104–105; these read LMQLNE and VH. Residue S149 is modified to Phosphoserine. The tract at residues 176–220 is disordered; sequence LFNGFETPDKSEPPFYVGSNGDDSFSSSGDVSLSASPVPASLTQP. The span at 192 to 213 shows a compositional bias: low complexity; sequence VGSNGDDSFSSSGDVSLSASPV. The DRBM 2 domain occupies 231–298; sequence PSGKNPVMIL…AQSALATVFN (68 aa). Interaction with substrate RNA stretches follow at residues 237-242 and H259; that span reads VMILNE. An A to I editase domain is found at 370–707; it reads SVSTGTKCIN…VEKPTEQDQF (338 aa). Zn(2+) is bound at residue H394. Catalysis depends on E396, which acts as the Proton donor. 1D-myo-inositol hexakisphosphate contacts are provided by R400 and R401. Zn(2+) is bound by residues C451 and C526. The 1D-myo-inositol hexakisphosphate site is built by K529, R532, K639, K672, K682, and K700.

As to quaternary structure, homodimer. Homodimerization is essential for its catalytic activity. Can form heterodimers with isoform 5 of ADAR/ADAR1. Requires 1D-myo-inositol hexakisphosphate as cofactor.

It is found in the nucleus. Its subcellular location is the nucleolus. The enzyme catalyses adenosine in double-stranded RNA + H2O + H(+) = inosine in double-stranded RNA + NH4(+). Its function is as follows. Catalyzes the hydrolytic deamination of adenosine to inosine in double-stranded RNA (dsRNA) referred to as A-to-I RNA editing. This may affect gene expression and function in a number of ways that include mRNA translation by changing codons and hence the amino acid sequence of proteins; pre-mRNA splicing by altering splice site recognition sequences; RNA stability by changing sequences involved in nuclease recognition; genetic stability in the case of RNA virus genomes by changing sequences during viral RNA replication; and RNA structure-dependent activities such as microRNA production or targeting or protein-RNA interactions. Can edit both viral and cellular RNAs and can edit RNAs at multiple sites (hyper-editing) or at specific sites (site-specific editing). Its cellular RNA substrates include: bladder cancer-associated protein (BLCAP), neurotransmitter receptors for glutamate (GRIA2 and GRIK2) and serotonin (HTR2C), GABA receptor (GABRA3) and potassium voltage-gated channel (KCNA1). Site-specific RNA editing of transcripts encoding these proteins results in amino acid substitutions which consequently alter their functional activities. Edits GRIA2 at both the Q/R and R/G sites efficiently but converts the adenosine in hotspot1 much less efficiently. Can inhibit cell proliferation and migration and can stimulate exocytosis. In Mus musculus (Mouse), this protein is Double-stranded RNA-specific editase 1 (Adarb1).